The primary structure comprises 173 residues: Co-chaperone protein HscB homolog (173 aa).

In terms of domain architecture, J spans 3–75; the sequence is NPFALFDLPI…ILRADCIIAL (73 aa).

It belongs to the HscB family. Interacts with HscA and stimulates its ATPase activity.

In terms of biological role, co-chaperone involved in the maturation of iron-sulfur cluster-containing proteins. Seems to help targeting proteins to be folded toward HscA. The chain is Co-chaperone protein HscB homolog from Mannheimia succiniciproducens (strain KCTC 0769BP / MBEL55E).